Reading from the N-terminus, the 634-residue chain is 1-deoxy-D-xylulose-5-phosphate synthase (634 aa).

Thiamine diphosphate contacts are provided by residues His-79 and 120-122; that span reads GHA. Asp-151 provides a ligand contact to Mg(2+). Thiamine diphosphate is bound by residues 152-153, Asn-180, Tyr-292, and Glu-376; that span reads GS. Asn-180 contributes to the Mg(2+) binding site.

Belongs to the transketolase family. DXPS subfamily. Homodimer. Requires Mg(2+) as cofactor. It depends on thiamine diphosphate as a cofactor.

The catalysed reaction is D-glyceraldehyde 3-phosphate + pyruvate + H(+) = 1-deoxy-D-xylulose 5-phosphate + CO2. It functions in the pathway metabolic intermediate biosynthesis; 1-deoxy-D-xylulose 5-phosphate biosynthesis; 1-deoxy-D-xylulose 5-phosphate from D-glyceraldehyde 3-phosphate and pyruvate: step 1/1. Functionally, catalyzes the acyloin condensation reaction between C atoms 2 and 3 of pyruvate and glyceraldehyde 3-phosphate to yield 1-deoxy-D-xylulose-5-phosphate (DXP). This chain is 1-deoxy-D-xylulose-5-phosphate synthase, found in Porphyromonas gingivalis (strain ATCC BAA-308 / W83).